The sequence spans 144 residues: ATP synthase epsilon chain (144 aa).

Belongs to the ATPase epsilon chain family. In terms of assembly, F-type ATPases have 2 components, CF(1) - the catalytic core - and CF(0) - the membrane proton channel. CF(1) has five subunits: alpha(3), beta(3), gamma(1), delta(1), epsilon(1). CF(0) has three main subunits: a, b and c.

The protein localises to the cell inner membrane. Its function is as follows. Produces ATP from ADP in the presence of a proton gradient across the membrane. This chain is ATP synthase epsilon chain, found in Ectopseudomonas mendocina (strain ymp) (Pseudomonas mendocina).